The sequence spans 182 residues: MNRLSTKLVVAIGIGSALYGILGLWGFSIAPNTFIKPALAILTVFGALFGPVAGLLIGLIGHTVTDTIAGWSIWWGWVISSGIIGFTMGFIQKRVGFSVKNGTYNKGDISYLAITGLIGIVIAIIFAGAFDIIVMGEPFDKIVIQVLGATIADVIVFLVLGLPITIGLAKSNKKHTHLKIEK.

5 helical membrane-spanning segments follow: residues 9–29 (VVAIGIGSALYGILGLWGFSI), 40–60 (AILTVFGALFGPVAGLLIGLI), 71–91 (WSIWWGWVISSGIIGFTMGFI), 114–134 (ITGLIGIVIAIIFAGAFDIIV), and 142–162 (IVIQVLGATIADVIVFLVLGL).

The protein belongs to the UPF0397 family.

It localises to the cell membrane. The sequence is that of UPF0397 protein BA_2640/GBAA_2640/BAS2460 from Bacillus anthracis.